The following is a 357-amino-acid chain: Phenylalanine--tRNA ligase alpha subunit (357 aa).

Glu-258 contributes to the Mg(2+) binding site.

This sequence belongs to the class-II aminoacyl-tRNA synthetase family. Phe-tRNA synthetase alpha subunit type 1 subfamily. Tetramer of two alpha and two beta subunits. It depends on Mg(2+) as a cofactor.

It is found in the cytoplasm. The catalysed reaction is tRNA(Phe) + L-phenylalanine + ATP = L-phenylalanyl-tRNA(Phe) + AMP + diphosphate + H(+). This chain is Phenylalanine--tRNA ligase alpha subunit, found in Caulobacter vibrioides (strain ATCC 19089 / CIP 103742 / CB 15) (Caulobacter crescentus).